A 749-amino-acid chain; its full sequence is Protein SWAP (749 aa).

The dry CEEERYL stretch occupies residues 8–124 (SNVHVQEYKD…RNDQRNAIGF (117 aa)). The segment covering 105-118 (EQEKEEEEKRRNDQ) has biased composition (basic and acidic residues). Positions 105–149 (EQEKEEEEKRRNDQRNAIGFDYGTGKVKARESDSEDEPFEPPEGI) are disordered. The stretch at 166–209 (IIEKTASFIVANGTQMEIVIKAKQRNNAEQFGFLEFDHRLNPFY) is one SURP motif 1 repeat. The disordered stretch occupies residues 256 to 310 (HGSDSEDSDSDYELHPSLLSGGAKRPVTPEKPGAIGPRKKPVEPEKPPDFTLKPV). Residues 391-431 (ILNSYAEHVAQRGLEAEASLAAREDLQLHFMEPKSPYYSYY) form an SURP motif 2 repeat. A compositionally biased stretch (low complexity) spans 458 to 478 (PAPPSAVSSPGPSSLMSLNLS). 3 disordered regions span residues 458-498 (PAPP…SSRL), 537-592 (LRND…QVDR), and 608-749 (KAKK…DRRR). The segment covering 538–552 (RNDEPRDESSFRFDP) has biased composition (basic and acidic residues). Residues 560-569 (PSDTTANFSD) are compositionally biased toward polar residues. A compositionally biased stretch (pro residues) spans 574 to 583 (FPPPTPPVIP). 2 stretches are compositionally biased toward basic and acidic residues: residues 608–659 (KAKK…RSLD) and 679–689 (EEMKRTDEDRE). Composition is skewed to basic residues over residues 690-704 (RKRHRKRSRSRRRSR) and 714-749 (EHKKSRKSGRHHRSRSRSSSRDRHRRNRSRSRDRRR).

Functionally, it is a regulator of pre-mRNA splicing (and, possibly, of other RNA processing events). It may regulate its own expression at the level of RNA processing. The chain is Protein SWAP (swp-1) from Caenorhabditis elegans.